The following is a 726-amino-acid chain: Eukaryotic translation initiation factor 3 subunit B (726 aa).

The interval 1 to 94 is sufficient for interaction with HCR1 and TIF32; that stretch reads MSAALEDIKL…LFVECASPAD (94 aa). The tract at residues 1–219 is sufficient for interaction with PIC8; it reads MSAALEDIKL…GVVMWGGPHF (219 aa). The RRM domain maps to 37 to 120; sequence QYIVVCGAPV…HRLFIYTMRD (84 aa). WD repeat units follow at residues 142 to 182, 186 to 224, 235 to 283, 331 to 374, 442 to 485, 505 to 549, and 566 to 611; these read FPTS…EESV, RKNW…RLRR, VSPS…LQST, LKVP…MSCK, ELKD…FAPE, ITDK…TDKN, and NSFP…VKEE.

This sequence belongs to the eIF-3 subunit B family. Component of the eukaryotic translation initiation factor 3 (eIF-3) complex.

Its subcellular location is the cytoplasm. Functionally, RNA-binding component of the eukaryotic translation initiation factor 3 (eIF-3) complex, which is involved in protein synthesis of a specialized repertoire of mRNAs and, together with other initiation factors, stimulates binding of mRNA and methionyl-tRNAi to the 40S ribosome. The eIF-3 complex specifically targets and initiates translation of a subset of mRNAs involved in cell proliferation. The sequence is that of Eukaryotic translation initiation factor 3 subunit B from Vanderwaltozyma polyspora (strain ATCC 22028 / DSM 70294 / BCRC 21397 / CBS 2163 / NBRC 10782 / NRRL Y-8283 / UCD 57-17) (Kluyveromyces polysporus).